The chain runs to 117 residues: G antigen 5 (117 aa).

The segment at 1-117 (MSWRGRSTYY…PEEGEKQSQC (117 aa)) is disordered. 2 stretches are compositionally biased toward acidic residues: residues 32–45 (FSDE…EEGE) and 87–96 (ECEDGPDGQE). Positions 103 to 117 (EEVKTPEEGEKQSQC) are enriched in basic and acidic residues.

Belongs to the GAGE family. As to expression, expressed in a variety of tumor tissues but not in normal tissues, except testis.

The chain is G antigen 5 (GAGE5) from Homo sapiens (Human).